We begin with the raw amino-acid sequence, 751 residues long: Serine/threonine-protein kinase-like protein CCR4 (751 aa).

The first 31 residues, 1–31, serve as a signal peptide directing secretion; sequence MALTISISCFSSYFVSLLLLVLSSFSFVCFS. Topologically, residues 32-366 are extracellular; it reads LSTVSISHIS…NKTWSRRNIA (335 aa). N-linked (GlcNAc...) asparagine glycans are attached at residues asparagine 42, asparagine 51, asparagine 98, asparagine 243, asparagine 254, asparagine 283, and asparagine 357. Residues 367–387 form a helical membrane-spanning segment; sequence FLVVGCVGTFSLLLVISFLIF. Residues 388-751 lie on the Cytoplasmic side of the membrane; it reads KSHCRCRVHD…TETVSRSNTY (364 aa). The 291-residue stretch at 443 to 733 folds into the Protein kinase domain; sequence FSVRFHLGIG…EVVSKLESAL (291 aa). ATP contacts are provided by residues 449–457 and lysine 471; that span reads LGIGSFGSV. The Proton acceptor role is filled by aspartate 579.

This sequence belongs to the protein kinase superfamily. Ser/Thr protein kinase family. Homodimer. As to expression, expressed in roots, leaves, especially in trichomes, shoot apical meristems (SAM), and, to a lower extent, in floral buds.

Its subcellular location is the membrane. It catalyses the reaction L-seryl-[protein] + ATP = O-phospho-L-seryl-[protein] + ADP + H(+). The catalysed reaction is L-threonyl-[protein] + ATP = O-phospho-L-threonyl-[protein] + ADP + H(+). The polypeptide is Serine/threonine-protein kinase-like protein CCR4 (CCR4) (Arabidopsis thaliana (Mouse-ear cress)).